Reading from the N-terminus, the 620-residue chain is Acetylcholinesterase 1 (620 aa).

Residues 1–31 (MRYSLLFFIFLPCVITAVDLIHLHDGSPLFG) form the signal peptide. Asn74 is a glycosylation site (N-linked (GlcNAc...) asparagine). The cysteines at positions 82 and 109 are disulfide-linked. Ser216 serves as the catalytic Acyl-ester intermediate. The cysteines at positions 270 and 286 are disulfide-linked. Asn272 carries an N-linked (GlcNAc...) asparagine glycan. Catalysis depends on charge relay system residues Glu346 and His468. Cys430 and Cys558 are oxidised to a cystine. 2 N-linked (GlcNAc...) asparagine glycosylation sites follow: Asn486 and Asn536.

The protein belongs to the type-B carboxylesterase/lipase family. In terms of assembly, oligomer composed of disulfide-linked homodimers.

It localises to the synapse. It is found in the secreted. The protein resides in the cell membrane. The enzyme catalyses acetylcholine + H2O = choline + acetate + H(+). Its function is as follows. Rapidly hydrolyzes choline released into the synapse. This Caenorhabditis briggsae protein is Acetylcholinesterase 1 (ace-1).